The primary structure comprises 97 residues: UPF0250 protein HD_2015 (97 aa).

It belongs to the UPF0250 family.

The protein is UPF0250 protein HD_2015 of Haemophilus ducreyi (strain 35000HP / ATCC 700724).